The sequence spans 589 residues: Cytoplasmic polyadenylation element-binding protein 2 (589 aa).

2 disordered regions span residues 1–103 (MPPP…QAAA) and 118–140 (PLLK…SMSW). Residues 24 to 33 (FFPSFSPVSP) are compositionally biased toward low complexity. Residues 44–53 (SGGGGGGFGG) are compositionally biased toward gly residues. Positions 60 to 81 (VPPPPPPAMNIPQQQPPPPAAP) are enriched in pro residues. 2 stretches are compositionally biased toward low complexity: residues 82–103 (QQPQ…QAAA) and 130–140 (SSGWGTGSMSW). The residue at position 89 (Ser-89) is a Phosphoserine. RRM domains are found at residues 332–423 (RKVF…PWNL) and 440–522 (KTIF…PYVL).

It belongs to the RRM CPEB family. Interacts with TENT2/GLD2.

The protein localises to the cytoplasm. In terms of biological role, may play a role in translational regulation of stored mRNAs in transcriptionally inactive haploid spermatids. Binds to poly(U) RNA oligomers. Required for cell cycle progression, specifically for the transition from metaphase to anaphase. This Homo sapiens (Human) protein is Cytoplasmic polyadenylation element-binding protein 2 (CPEB2).